The following is a 299-amino-acid chain: DNA repair protein RecO (299 aa).

A disordered region spans residues Met1–Ser62. Positions Ala25–Ala41 are enriched in low complexity.

The protein belongs to the RecO family.

Functionally, involved in DNA repair and RecF pathway recombination. The sequence is that of DNA repair protein RecO from Paraburkholderia xenovorans (strain LB400).